A 369-amino-acid chain; its full sequence is Probable serine/threonine-protein kinase FMP48 (369 aa).

In terms of domain architecture, Protein kinase spans Y2–K369. Residues I8 to V16 and K31 contribute to the ATP site. D133 acts as the Proton acceptor in catalysis.

It belongs to the protein kinase superfamily. Ser/Thr protein kinase family.

Its subcellular location is the mitochondrion. It carries out the reaction L-seryl-[protein] + ATP = O-phospho-L-seryl-[protein] + ADP + H(+). It catalyses the reaction L-threonyl-[protein] + ATP = O-phospho-L-threonyl-[protein] + ADP + H(+). In Saccharomyces cerevisiae (strain ATCC 204508 / S288c) (Baker's yeast), this protein is Probable serine/threonine-protein kinase FMP48 (FMP48).